The sequence spans 268 residues: Bis(5'-nucleosyl)-tetraphosphatase, symmetrical (268 aa).

This sequence belongs to the Ap4A hydrolase family.

It catalyses the reaction P(1),P(4)-bis(5'-adenosyl) tetraphosphate + H2O = 2 ADP + 2 H(+). Functionally, hydrolyzes diadenosine 5',5'''-P1,P4-tetraphosphate to yield ADP. The sequence is that of Bis(5'-nucleosyl)-tetraphosphatase, symmetrical from Vibrio parahaemolyticus serotype O3:K6 (strain RIMD 2210633).